The sequence spans 268 residues: Tryptophan synthase alpha chain (268 aa).

Active-site proton acceptor residues include glutamate 49 and aspartate 60.

It belongs to the TrpA family. Tetramer of two alpha and two beta chains.

The catalysed reaction is (1S,2R)-1-C-(indol-3-yl)glycerol 3-phosphate + L-serine = D-glyceraldehyde 3-phosphate + L-tryptophan + H2O. The protein operates within amino-acid biosynthesis; L-tryptophan biosynthesis; L-tryptophan from chorismate: step 5/5. In terms of biological role, the alpha subunit is responsible for the aldol cleavage of indoleglycerol phosphate to indole and glyceraldehyde 3-phosphate. This chain is Tryptophan synthase alpha chain, found in Escherichia coli O6:H1 (strain CFT073 / ATCC 700928 / UPEC).